The primary structure comprises 369 residues: DNA polymerase processivity factor (369 aa).

Residues 345 to 369 (IGSRKRGPSSPPFEREGKLAKVINQ) form a disordered region.

This sequence belongs to the herpesviridae DNA polymerase processivity factor family. Interacts with the DNA polymerase catalytic subunit. Interacts with the origin-binding protein.

It is found in the host nucleus. Its function is as follows. Plays an essential role in viral DNA replication by acting as the polymerase accessory subunit. Associates with the viral polymerase to increase its processivity and forms high-affinity direct interactions with DNA. Facilitates the origin-binding protein UL9 loading onto DNA thus increasing its ability to assemble into a functional complex capable of unwinding duplex DNA. In Gallus gallus (Chicken), this protein is DNA polymerase processivity factor (MDV055).